The following is a 239-amino-acid chain: Small ribosomal subunit protein uS3c (239 aa).

The KH type-2 domain occupies 43–139 (IKNYIQKNRK…RFNISIEKVK (97 aa)). The interval 50–74 (NRKKGSNRKIESDSSSEVITHNRKM) is disordered.

It belongs to the universal ribosomal protein uS3 family. As to quaternary structure, part of the 30S ribosomal subunit.

The protein localises to the plastid. The protein resides in the chloroplast. The sequence is that of Small ribosomal subunit protein uS3c (rps3) from Triticum aestivum (Wheat).